We begin with the raw amino-acid sequence, 375 residues long: Muconate cycloisomerase 1 (375 aa).

Lysine 171 functions as the Proton acceptor in the catalytic mechanism. Residues aspartate 200, glutamate 226, and aspartate 251 each contribute to the Mn(2+) site. The active-site Proton donor is glutamate 329.

Belongs to the mandelate racemase/muconate lactonizing enzyme family. Homooctamer. It depends on Mn(2+) as a cofactor.

The enzyme catalyses (S)-muconolactone = cis,cis-muconate + H(+). It functions in the pathway aromatic compound metabolism; beta-ketoadipate pathway; 5-oxo-4,5-dihydro-2-furylacetate from catechol: step 2/3. Its function is as follows. Catalyzes a syn cycloisomerization. The chain is Muconate cycloisomerase 1 (catB) from Pseudomonas putida (Arthrobacter siderocapsulatus).